The following is an 87-amino-acid chain: Acylphosphatase (87 aa).

Positions 1–87 constitute an Acylphosphatase-like domain; it reads MAWVHGRVQG…EDYQDFRIRY (87 aa). Active-site residues include Arg-14 and Asn-32.

Belongs to the acylphosphatase family.

It carries out the reaction an acyl phosphate + H2O = a carboxylate + phosphate + H(+). The chain is Acylphosphatase (acyP) from Cronobacter sakazakii (strain ATCC BAA-894) (Enterobacter sakazakii).